Here is a 539-residue protein sequence, read N- to C-terminus: Cytochrome P450 monooxygenase pvhE (539 aa).

A helical membrane pass occupies residues 15-31 (VAFCSLVILCILFKVLT). N-linked (GlcNAc...) asparagine glycosylation is present at Asn-379. Heme is bound at residue Cys-473.

Belongs to the cytochrome P450 family. Requires heme as cofactor.

It is found in the membrane. Its pathway is secondary metabolite biosynthesis. Cytochrome P450 monooxygenase; part of the gene cluster that mediates the biosynthesis of varicidin A, an antifungal natural product containing a cis-octahydrodecalin core. The PKS module of pvhA together with the enoylreductase pvhC catalyze the formation of the polyketide unit which is then conjugated to L-isoleucine by the condensation domain of the NRPS module. Activity of the Dieckmann cyclase domain (RED) of pvhA results in release of an acyclic tetramate. The cytochrome P450 monooxygenase pvhE then catalyzes the oxidation of the C21 methyl group to a to carboxylate group. The methyltransferase pvhD then further methylates the pvhE product. The Diels-Alderase pvhB is able to catalyze Diels-Alder cycloaddition using both pvhE and pvhD products as substrates to form the decalin ring, yielding varicidin B and A, respectively. The sequence is that of Cytochrome P450 monooxygenase pvhE from Talaromyces variabilis (Penicillium variabile).